A 424-amino-acid polypeptide reads, in one-letter code: Glucose-1-phosphate adenylyltransferase (424 aa).

Alpha-D-glucose 1-phosphate-binding positions include Y112, G177, 192 to 193 (EK), and S210.

It belongs to the bacterial/plant glucose-1-phosphate adenylyltransferase family. In terms of assembly, homotetramer.

The enzyme catalyses alpha-D-glucose 1-phosphate + ATP + H(+) = ADP-alpha-D-glucose + diphosphate. The protein operates within glycan biosynthesis; glycogen biosynthesis. In terms of biological role, involved in the biosynthesis of ADP-glucose, a building block required for the elongation reactions to produce glycogen. Catalyzes the reaction between ATP and alpha-D-glucose 1-phosphate (G1P) to produce pyrophosphate and ADP-Glc. This Methylococcus capsulatus (strain ATCC 33009 / NCIMB 11132 / Bath) protein is Glucose-1-phosphate adenylyltransferase.